The sequence spans 132 residues: Acyl carrier protein 3, chloroplastic (132 aa).

A chloroplast-targeting transit peptide spans 1 to 49; sequence MASIAGSAVSFAKPVKAINTNSLSFSGARRGNAFLRLQPVPMRFAVCCS. In terms of domain architecture, Carrier spans 52–127; sequence QDTVEKVCEI…DAATLIDKLV (76 aa). Position 87 is an O-(pantetheine 4'-phosphoryl)serine (serine 87).

The protein belongs to the acyl carrier protein (ACP) family. In terms of processing, 4'-phosphopantetheine is transferred from CoA to a specific serine of apo-ACP by acpS. This modification is essential for activity because fatty acids are bound in thioester linkage to the sulfhydryl of the prosthetic group.

Its subcellular location is the plastid. The protein localises to the chloroplast. It participates in lipid metabolism; fatty acid biosynthesis. Functionally, carrier of the growing fatty acid chain in fatty acid biosynthesis. The sequence is that of Acyl carrier protein 3, chloroplastic (ACL1.3) from Hordeum vulgare (Barley).